We begin with the raw amino-acid sequence, 177 residues long: Large ribosomal subunit protein uL6 (177 aa).

Residues 152-171 (RPPEPYKGKGVRYDDEEVRR) show a composition bias toward basic and acidic residues. The tract at residues 152–177 (RPPEPYKGKGVRYDDEEVRRKEAKKK) is disordered.

This sequence belongs to the universal ribosomal protein uL6 family. As to quaternary structure, part of the 50S ribosomal subunit.

In terms of biological role, this protein binds to the 23S rRNA, and is important in its secondary structure. It is located near the subunit interface in the base of the L7/L12 stalk, and near the tRNA binding site of the peptidyltransferase center. This chain is Large ribosomal subunit protein uL6, found in Shewanella sp. (strain ANA-3).